A 121-amino-acid chain; its full sequence is Protein yippee (121 aa).

Positions 13-110 (KLFNCAQCHT…LEYALITEAE (98 aa)) constitute a Yippee domain. 4 residues coordinate Zn(2+): C17, C20, C73, and C76.

This sequence belongs to the yippee family. Interacts with hemolin.

The polypeptide is Protein yippee (Drosophila melanogaster (Fruit fly)).